Consider the following 315-residue polypeptide: Ribose-phosphate pyrophosphokinase (315 aa).

ATP contacts are provided by residues 37 to 39 and 96 to 97; these read DGE and RQ. The Mg(2+) site is built by His-131 and Asp-170. Lys-194 is an active-site residue. D-ribose 5-phosphate contacts are provided by residues Arg-196, Asp-220, and 224–228; that span reads DTGGT.

It belongs to the ribose-phosphate pyrophosphokinase family. Class I subfamily. Homohexamer. Mg(2+) serves as cofactor.

The protein resides in the cytoplasm. The catalysed reaction is D-ribose 5-phosphate + ATP = 5-phospho-alpha-D-ribose 1-diphosphate + AMP + H(+). It functions in the pathway metabolic intermediate biosynthesis; 5-phospho-alpha-D-ribose 1-diphosphate biosynthesis; 5-phospho-alpha-D-ribose 1-diphosphate from D-ribose 5-phosphate (route I): step 1/1. In terms of biological role, involved in the biosynthesis of the central metabolite phospho-alpha-D-ribosyl-1-pyrophosphate (PRPP) via the transfer of pyrophosphoryl group from ATP to 1-hydroxyl of ribose-5-phosphate (Rib-5-P). The sequence is that of Ribose-phosphate pyrophosphokinase from Salmonella typhi.